The sequence spans 405 residues: Argininosuccinate synthase (405 aa).

ATP is bound by residues 10 to 18 and Ala-37; that span reads AYSGGLDTS. Residues Tyr-88 and Ser-93 each coordinate L-citrulline. Gly-118 serves as a coordination point for ATP. Residues Thr-120, Asn-124, and Asp-125 each coordinate L-aspartate. Asn-124 serves as a coordination point for L-citrulline. Residues Arg-128, Ser-179, Ser-188, Glu-264, and Tyr-276 each coordinate L-citrulline.

This sequence belongs to the argininosuccinate synthase family. Type 1 subfamily. As to quaternary structure, homotetramer.

It is found in the cytoplasm. The enzyme catalyses L-citrulline + L-aspartate + ATP = 2-(N(omega)-L-arginino)succinate + AMP + diphosphate + H(+). It participates in amino-acid biosynthesis; L-arginine biosynthesis; L-arginine from L-ornithine and carbamoyl phosphate: step 2/3. The chain is Argininosuccinate synthase from Ectopseudomonas mendocina (strain ymp) (Pseudomonas mendocina).